Consider the following 350-residue polypeptide: MAILSYISATSTTPPIPQDQSPNSRLPTKIILPNKKPEKWSTGVAPGEYGGPPTTTKLRKYWGGEKEDPITSTDLIWNRDFMDQMKKLFDDPNDSSLDPSPSKEKSSGFLSFSRVMSLDSMDVDLSKELASSSKSVVKNRLDTSKSEAKKQMSKAIVSPKWKLAPTRREQEKWDRATKAATGGSDVMFRELRRPRGDPEVQAAKDREQYFKLKNKIQVLTLGIGGVGLVSAYISYTPEIALSFGAGLLGSLAYMRMLGNSVDAMADGARGVAKGAANQPRLLVPVVLVMIFNRWNAILVPEYGFMHLELIPMLVGFFTYKIATFFQAIEEAISITTQKPESISPDTQASD.

Residues 1–46 (MAILSYISATSTTPPIPQDQSPNSRLPTKIILPNKKPEKWSTGVAP) constitute a chloroplast transit peptide. The segment covering 7–26 (ISATSTTPPIPQDQSPNSRL) has biased composition (polar residues). Positions 7–58 (ISATSTTPPIPQDQSPNSRLPTKIILPNKKPEKWSTGVAPGEYGGPPTTTKL) are disordered. The residue at position 117 (Ser117) is a Phosphoserine. The next 4 membrane-spanning stretches (helical) occupy residues 213 to 233 (KNKI…SAYI), 239 to 259 (IALS…MLGN), 276 to 296 (ANQP…RWNA), and 304 to 324 (FMHL…IATF).

The protein resides in the plastid. It is found in the chloroplast thylakoid membrane. Functionally, facilitates the assembly of the membrane proton channel of the chloroplastic F-type ATPase. Specifically required for the efficient assembly and integration of the CF(0) subunit c into the chloroplastic ATPase complex in the thylakoid membrane. The polypeptide is Protein CONSERVED ONLY IN THE GREEN LINEAGE 160, chloroplastic (Arabidopsis thaliana (Mouse-ear cress)).